Here is a 307-residue protein sequence, read N- to C-terminus: Acyl transferase (307 aa).

Catalysis depends on charge relay system residues Ser-116, Asp-213, and His-243.

It belongs to the LuxD family.

It participates in lipid metabolism; fatty acid reduction for biolumincescence. Acyl transferase is part of the fatty acid reductase system required for aldehyde biosynthesis; it produces fatty acids for the luminescent reaction. This Photorhabdus luminescens (Xenorhabdus luminescens) protein is Acyl transferase.